The primary structure comprises 159 residues: Ubiquitin-conjugating enzyme E2 variant 1B (159 aa).

A UBC core domain is found at 11–159; it reads PRNFRLLEEL…KGLVVKCCVM (149 aa).

Belongs to the ubiquitin-conjugating enzyme family. In terms of assembly, heterodimer with UBC35 or UBC36. As to expression, expressed in roots, shoots, leaves, stems and flowers, but not in pollen.

Has no ubiquitin ligase activity on its own. The heterodimer with UBC catalyzes the synthesis of non-canonical poly-ubiquitin chains that are linked through 'Lys-63'. This type of poly-ubiquitination does not lead to protein degradation by the proteasome. Mediates transcriptional activation of target genes. May play a role in the control of progress through the cell cycle and differentiation. May play a role in the error-free DNA repair pathway and contributes to the survival of cells after DNA damage. The sequence is that of Ubiquitin-conjugating enzyme E2 variant 1B (UEV1B) from Arabidopsis thaliana (Mouse-ear cress).